The chain runs to 272 residues: Expansin-B16 (272 aa).

The N-terminal stretch at 1–25 (MAAFSSSSSAPMLIRSVLFVSLLSA) is a signal peptide. The 111-residue stretch at 63 to 173 (GGACGYGTLV…RRTACKYGGK (111 aa)) folds into the Expansin-like EG45 domain. Intrachain disulfides connect cysteine 66-cysteine 95, cysteine 98-cysteine 168, and cysteine 103-cysteine 109. The Expansin-like CBD domain occupies 186 to 267 (FWLSLLVEFE…NWTPKATYTS (82 aa)).

Belongs to the expansin family. Expansin B subfamily.

It localises to the secreted. It is found in the cell wall. The protein resides in the membrane. May cause loosening and extension of plant cell walls by disrupting non-covalent bonding between cellulose microfibrils and matrix glucans. No enzymatic activity has been found. May be required for rapid internodal elongation in deepwater rice during submergence. The polypeptide is Expansin-B16 (EXPB16) (Oryza sativa subsp. japonica (Rice)).